The primary structure comprises 386 residues: ABC transporter permease protein NatB (386 aa).

6 helical membrane passes run 19-39 (TILL…FFYE), 172-192 (AIML…SGAM), 226-246 (WLAV…FLIL), 273-293 (ALII…ISIM), 300-320 (AQSY…FIFS), and 353-373 (ATIL…FLLA).

The complex is composed of NatA and NatB.

The protein localises to the cell membrane. The enzyme catalyses Na(+)(in) + ATP + H2O = Na(+)(out) + ADP + phosphate + H(+). Part of an ABC transporter that catalyzes ATP-dependent electrogenic sodium extrusion. This Bacillus subtilis (strain 168) protein is ABC transporter permease protein NatB.